The sequence spans 112 residues: UPF0212 protein Mpal_1084 (112 aa).

This sequence belongs to the UPF0212 family.

The chain is UPF0212 protein Mpal_1084 from Methanosphaerula palustris (strain ATCC BAA-1556 / DSM 19958 / E1-9c).